Consider the following 195-residue polypeptide: Protein GrpE (195 aa).

Belongs to the GrpE family. In terms of assembly, homodimer.

It localises to the cytoplasm. Its function is as follows. Participates actively in the response to hyperosmotic and heat shock by preventing the aggregation of stress-denatured proteins, in association with DnaK and GrpE. It is the nucleotide exchange factor for DnaK and may function as a thermosensor. Unfolded proteins bind initially to DnaJ; upon interaction with the DnaJ-bound protein, DnaK hydrolyzes its bound ATP, resulting in the formation of a stable complex. GrpE releases ADP from DnaK; ATP binding to DnaK triggers the release of the substrate protein, thus completing the reaction cycle. Several rounds of ATP-dependent interactions between DnaJ, DnaK and GrpE are required for fully efficient folding. This Francisella tularensis subsp. novicida (strain U112) protein is Protein GrpE.